Here is a 470-residue protein sequence, read N- to C-terminus: 6-phospho-beta-galactosidase (470 aa).

Residues Gln19, His116, Asn159, Glu160, and Asn297 each contribute to the D-galactose 6-phosphate site. Glu160 (proton donor) is an active-site residue. Glu375 serves as the catalytic Nucleophile. Residues Ser430, Trp431, Lys437, and Tyr439 each coordinate D-galactose 6-phosphate.

It belongs to the glycosyl hydrolase 1 family.

It carries out the reaction a 6-phospho-beta-D-galactoside + H2O = D-galactose 6-phosphate + an alcohol. Its pathway is carbohydrate metabolism; lactose degradation; D-galactose 6-phosphate and beta-D-glucose from lactose 6-phosphate: step 1/1. The protein is 6-phospho-beta-galactosidase of Staphylococcus aureus (strain Mu3 / ATCC 700698).